Here is a 341-residue protein sequence, read N- to C-terminus: L-threonine 3-dehydrogenase (341 aa).

Cys38 is a binding site for Zn(2+). Residues Thr40 and His43 each act as charge relay system in the active site. Residues His63, Glu64, Cys93, Cys96, Cys99, and Cys107 each coordinate Zn(2+). NAD(+) contacts are provided by residues Ile175, Asp195, Arg200, 262–264 (LGI), and 286–287 (IY).

This sequence belongs to the zinc-containing alcohol dehydrogenase family. As to quaternary structure, homotetramer. Zn(2+) is required as a cofactor.

The protein resides in the cytoplasm. The catalysed reaction is L-threonine + NAD(+) = (2S)-2-amino-3-oxobutanoate + NADH + H(+). Its pathway is amino-acid degradation; L-threonine degradation via oxydo-reductase pathway; glycine from L-threonine: step 1/2. Catalyzes the NAD(+)-dependent oxidation of L-threonine to 2-amino-3-ketobutyrate. The polypeptide is L-threonine 3-dehydrogenase (Photorhabdus laumondii subsp. laumondii (strain DSM 15139 / CIP 105565 / TT01) (Photorhabdus luminescens subsp. laumondii)).